The sequence spans 176 residues: Tubulin polymerization-promoting protein family member 3 (176 aa).

Position 2 is an N-acetylalanine (Ala2). The disordered stretch occupies residues 132-152; that stretch reads TGSHKERFDESGKGKGIAGRQ. Residues 134-144 show a composition bias toward basic and acidic residues; the sequence is SHKERFDESGK.

The protein belongs to the TPPP family. As to expression, expressed in endometrium during the mid-secretory phase (LH + 7) (at protein level).

Its subcellular location is the cytoplasm. It is found in the cytoskeleton. Functionally, regulator of microtubule dynamic that has microtubule bundling activity. Required for embryo implantation; possibly by regulating beta-catenin. Also required for decidualization via regulation of beta-catenin. The protein is Tubulin polymerization-promoting protein family member 3 of Homo sapiens (Human).